We begin with the raw amino-acid sequence, 414 residues long: Serine/threonine transporter SstT (414 aa).

Transmembrane regions (helical) follow at residues 16–36, 46–66, 84–104, 143–163, 180–200, 219–239, 300–320, and 332–352; these read GSLV…AWIS, LGTL…LMLV, ILFL…VFSF, ALLN…GFAL, AVTF…FGLV, LVVL…LLVF, MAGA…TLGV, and VVAS…LLLI.

The protein belongs to the dicarboxylate/amino acid:cation symporter (DAACS) (TC 2.A.23) family.

It localises to the cell inner membrane. The catalysed reaction is L-serine(in) + Na(+)(in) = L-serine(out) + Na(+)(out). It catalyses the reaction L-threonine(in) + Na(+)(in) = L-threonine(out) + Na(+)(out). In terms of biological role, involved in the import of serine and threonine into the cell, with the concomitant import of sodium (symport system). The chain is Serine/threonine transporter SstT from Salmonella dublin (strain CT_02021853).